A 460-amino-acid chain; its full sequence is 25S rRNA (cytosine-C(5))-methyltransferase rcm1 (460 aa).

S-adenosyl-L-methionine-binding positions include 223–229 (CAAPGNK), E246, D273, and D293. Residue C350 is the Nucleophile of the active site. Residues 430 to 439 (KMYKNDDDTK) are compositionally biased toward basic and acidic residues. The tract at residues 430-460 (KMYKNDDDTKKRKRKKKKKEVKKKARIQGEE) is disordered. The segment covering 440–460 (KRKRKKKKKEVKKKARIQGEE) has biased composition (basic residues).

The protein belongs to the class I-like SAM-binding methyltransferase superfamily. RsmB/NOP family. In terms of assembly, interacts with trm112.

The protein localises to the nucleus. Its subcellular location is the nucleolus. It carries out the reaction a cytidine in 25S rRNA + S-adenosyl-L-methionine = a 5-methylcytidine in 25S rRNA + S-adenosyl-L-homocysteine + H(+). Functionally, S-adenosyl-L-methionine-dependent methyltransferase that specifically methylates the C(5) position of a cytosine in 25S rRNA. This chain is 25S rRNA (cytosine-C(5))-methyltransferase rcm1 (rcm1), found in Schizosaccharomyces pombe (strain 972 / ATCC 24843) (Fission yeast).